Consider the following 95-residue polypeptide: uncharacterized protein (95 aa).

Residues 27–47 form a helical membrane-spanning segment; that stretch reads SFGLAIIGILLIACEIILFLT.

It is found in the membrane. This is an uncharacterized protein from Homo sapiens (Human).